A 350-amino-acid polypeptide reads, in one-letter code: Biotin synthase (350 aa).

Residues 41 to 268 (NEVQISRLLS…LSRVRLSAGR (228 aa)) form the Radical SAM core domain. [4Fe-4S] cluster-binding residues include cysteine 56, cysteine 60, and cysteine 63. [2Fe-2S] cluster contacts are provided by cysteine 100, cysteine 131, cysteine 191, and arginine 263.

It belongs to the radical SAM superfamily. Biotin synthase family. In terms of assembly, homodimer. [4Fe-4S] cluster is required as a cofactor. [2Fe-2S] cluster serves as cofactor.

It carries out the reaction (4R,5S)-dethiobiotin + (sulfur carrier)-SH + 2 reduced [2Fe-2S]-[ferredoxin] + 2 S-adenosyl-L-methionine = (sulfur carrier)-H + biotin + 2 5'-deoxyadenosine + 2 L-methionine + 2 oxidized [2Fe-2S]-[ferredoxin]. The protein operates within cofactor biosynthesis; biotin biosynthesis; biotin from 7,8-diaminononanoate: step 2/2. Its function is as follows. Catalyzes the conversion of dethiobiotin (DTB) to biotin by the insertion of a sulfur atom into dethiobiotin via a radical-based mechanism. This chain is Biotin synthase, found in Shewanella baltica (strain OS223).